A 190-amino-acid polypeptide reads, in one-letter code: 6,7-dimethyl-8-ribityllumazine synthase (190 aa).

5-amino-6-(D-ribitylamino)uracil is bound by residues Trp31, 65-67 (SFE), and 89-91 (CVI). A (2S)-2-hydroxy-3-oxobutyl phosphate-binding site is contributed by 94 to 95 (ET). Residue His97 is the Proton donor of the active site. Residue Phe122 coordinates 5-amino-6-(D-ribitylamino)uracil. Position 136 (Arg136) interacts with (2S)-2-hydroxy-3-oxobutyl phosphate.

This sequence belongs to the DMRL synthase family.

The enzyme catalyses (2S)-2-hydroxy-3-oxobutyl phosphate + 5-amino-6-(D-ribitylamino)uracil = 6,7-dimethyl-8-(1-D-ribityl)lumazine + phosphate + 2 H2O + H(+). It functions in the pathway cofactor biosynthesis; riboflavin biosynthesis; riboflavin from 2-hydroxy-3-oxobutyl phosphate and 5-amino-6-(D-ribitylamino)uracil: step 1/2. Its function is as follows. Catalyzes the formation of 6,7-dimethyl-8-ribityllumazine by condensation of 5-amino-6-(D-ribitylamino)uracil with 3,4-dihydroxy-2-butanone 4-phosphate. This is the penultimate step in the biosynthesis of riboflavin. This chain is 6,7-dimethyl-8-ribityllumazine synthase, found in Flavobacterium johnsoniae (strain ATCC 17061 / DSM 2064 / JCM 8514 / BCRC 14874 / CCUG 350202 / NBRC 14942 / NCIMB 11054 / UW101) (Cytophaga johnsonae).